Here is a 501-residue protein sequence, read N- to C-terminus: Ribose import ATP-binding protein RbsA (501 aa).

2 ABC transporter domains span residues 5–241 and 249–495; these read LELK…VGRK and LNLP…VGKQ. An ATP-binding site is contributed by 37–44; that stretch reads GENGAGKS.

Belongs to the ABC transporter superfamily. Ribose importer (TC 3.A.1.2.1) family. In terms of assembly, the complex is composed of an ATP-binding protein (RbsA), two transmembrane proteins (RbsC) and a solute-binding protein (RbsB).

The protein resides in the cell inner membrane. The enzyme catalyses D-ribose(out) + ATP + H2O = D-ribose(in) + ADP + phosphate + H(+). Functionally, part of the ABC transporter complex RbsABC involved in ribose import. Responsible for energy coupling to the transport system. In Photorhabdus laumondii subsp. laumondii (strain DSM 15139 / CIP 105565 / TT01) (Photorhabdus luminescens subsp. laumondii), this protein is Ribose import ATP-binding protein RbsA.